The sequence spans 177 residues: Large ribosomal subunit protein uL6 (177 aa).

This sequence belongs to the universal ribosomal protein uL6 family. As to quaternary structure, part of the 50S ribosomal subunit.

Its function is as follows. This protein binds to the 23S rRNA, and is important in its secondary structure. It is located near the subunit interface in the base of the L7/L12 stalk, and near the tRNA binding site of the peptidyltransferase center. The sequence is that of Large ribosomal subunit protein uL6 from Neisseria meningitidis serogroup C (strain 053442).